We begin with the raw amino-acid sequence, 76 residues long: Large ribosomal subunit protein uL24 (76 aa).

Belongs to the universal ribosomal protein uL24 family. As to quaternary structure, part of the 50S ribosomal subunit.

One of two assembly initiator proteins, it binds directly to the 5'-end of the 23S rRNA, where it nucleates assembly of the 50S subunit. In terms of biological role, one of the proteins that surrounds the polypeptide exit tunnel on the outside of the subunit. This Wolinella succinogenes (strain ATCC 29543 / DSM 1740 / CCUG 13145 / JCM 31913 / LMG 7466 / NCTC 11488 / FDC 602W) (Vibrio succinogenes) protein is Large ribosomal subunit protein uL24.